The chain runs to 308 residues: Ribosomal RNA small subunit methyltransferase H (308 aa).

S-adenosyl-L-methionine-binding positions include 32–34 (AGH), Asp52, Phe79, Asp100, and Gln107.

Belongs to the methyltransferase superfamily. RsmH family.

It is found in the cytoplasm. The catalysed reaction is cytidine(1402) in 16S rRNA + S-adenosyl-L-methionine = N(4)-methylcytidine(1402) in 16S rRNA + S-adenosyl-L-homocysteine + H(+). Specifically methylates the N4 position of cytidine in position 1402 (C1402) of 16S rRNA. The chain is Ribosomal RNA small subunit methyltransferase H from Mycoplasma mycoides subsp. mycoides SC (strain CCUG 32753 / NCTC 10114 / PG1).